Consider the following 142-residue polypeptide: Protein CPn_0742/CP_0003/CPj0742/CpB0770 (142 aa).

The segment at 115–142 is disordered; the sequence is LHPTKESKRPKQKLSSTKKNKKKNWIPL. Over residues 124 to 142 the composition is skewed to basic residues; it reads PKQKLSSTKKNKKKNWIPL.

Belongs to the chlamydial CPn_0742/CT_635/TC_0003 family.

In Chlamydia pneumoniae (Chlamydophila pneumoniae), this protein is Protein CPn_0742/CP_0003/CPj0742/CpB0770.